The chain runs to 209 residues: Large ribosomal subunit protein bL25 (209 aa).

Residues 183 to 209 (TAGERPAAEPAAAPGAAPAAGPEEAEE) form a disordered region. Residues 184–209 (AGERPAAEPAAAPGAAPAAGPEEAEE) show a composition bias toward low complexity.

The protein belongs to the bacterial ribosomal protein bL25 family. CTC subfamily. In terms of assembly, part of the 50S ribosomal subunit; part of the 5S rRNA/L5/L18/L25 subcomplex. Contacts the 5S rRNA. Binds to the 5S rRNA independently of L5 and L18.

This is one of the proteins that binds to the 5S RNA in the ribosome where it forms part of the central protuberance. The sequence is that of Large ribosomal subunit protein bL25 from Pelotomaculum thermopropionicum (strain DSM 13744 / JCM 10971 / SI).